The primary structure comprises 206 residues: Outer-membrane lipoprotein carrier protein (206 aa).

Positions 1–20 (MRLIRMLLPVLALTTLTAHA) are cleaved as a signal peptide.

Belongs to the LolA family. Monomer.

The protein localises to the periplasm. Functionally, participates in the translocation of lipoproteins from the inner membrane to the outer membrane. Only forms a complex with a lipoprotein if the residue after the N-terminal Cys is not an aspartate (The Asp acts as a targeting signal to indicate that the lipoprotein should stay in the inner membrane). In Pseudomonas fluorescens (strain Pf0-1), this protein is Outer-membrane lipoprotein carrier protein.